A 334-amino-acid polypeptide reads, in one-letter code: Lipoyl synthase (334 aa).

[4Fe-4S] cluster is bound by residues C71, C76, C82, C97, C101, C104, and S312. Residues W83–R301 enclose the Radical SAM core domain.

The protein belongs to the radical SAM superfamily. Lipoyl synthase family. Requires [4Fe-4S] cluster as cofactor.

The protein localises to the cytoplasm. It carries out the reaction [[Fe-S] cluster scaffold protein carrying a second [4Fe-4S](2+) cluster] + N(6)-octanoyl-L-lysyl-[protein] + 2 oxidized [2Fe-2S]-[ferredoxin] + 2 S-adenosyl-L-methionine + 4 H(+) = [[Fe-S] cluster scaffold protein] + N(6)-[(R)-dihydrolipoyl]-L-lysyl-[protein] + 4 Fe(3+) + 2 hydrogen sulfide + 2 5'-deoxyadenosine + 2 L-methionine + 2 reduced [2Fe-2S]-[ferredoxin]. It participates in protein modification; protein lipoylation via endogenous pathway; protein N(6)-(lipoyl)lysine from octanoyl-[acyl-carrier-protein]: step 2/2. Functionally, catalyzes the radical-mediated insertion of two sulfur atoms into the C-6 and C-8 positions of the octanoyl moiety bound to the lipoyl domains of lipoate-dependent enzymes, thereby converting the octanoylated domains into lipoylated derivatives. This chain is Lipoyl synthase, found in Halorhodospira halophila (strain DSM 244 / SL1) (Ectothiorhodospira halophila (strain DSM 244 / SL1)).